The primary structure comprises 915 residues: Probable serine/threonine-protein kinase dyrk2 (915 aa).

Composition is skewed to low complexity over residues 51-79 (TSNTTPSNNNNNNNTTTTITTTTTTPTIS), 108-119 (SSSKSSSNSSSI), 170-185 (SSSSTSSSSSSSSTTS), and 196-218 (SSNSGSSSSGGNNNNSDDNSGSS). Disordered regions lie at residues 51 to 119 (TSNT…SSSI), 132 to 334 (FSSS…SKSS), and 349 to 533 (AIKS…PTKS). The segment covering 234 to 260 (PSHTISDSPRSSTMKSRSVSISNGSLF) has biased composition (polar residues). 6 stretches are compositionally biased toward low complexity: residues 261-287 (SPTNTSVNNSNNNTSSNIKTPTKSSIS), 300-333 (SSSTTKTPTATTTTTTTTTSSSSSTSTNTTPSKS), 352-364 (SRSLSVSASLARV), 379-391 (SSSSSSSSSSFSS), 399-425 (SSSKTPTPTSSNTTVQPSTTSLSASKI), and 433-533 (SLSS…PTKS). In terms of domain architecture, Protein kinase spans 605–902 (FEIVSILGQG…AEQGLKHDWI (298 aa)). Residues 611 to 619 (LGQGSFCQV) and K634 each bind ATP. Residue D731 is the Proton acceptor of the active site.

It belongs to the protein kinase superfamily. CMGC Ser/Thr protein kinase family. MNB/DYRK subfamily.

The enzyme catalyses L-seryl-[protein] + ATP = O-phospho-L-seryl-[protein] + ADP + H(+). It carries out the reaction L-threonyl-[protein] + ATP = O-phospho-L-threonyl-[protein] + ADP + H(+). It catalyses the reaction L-tyrosyl-[protein] + ATP = O-phospho-L-tyrosyl-[protein] + ADP + H(+). The sequence is that of Probable serine/threonine-protein kinase dyrk2 (dyrk2) from Dictyostelium discoideum (Social amoeba).